Consider the following 301-residue polypeptide: Probable alpha-L-glutamate ligase (301 aa).

Residues 104–287 (LQLLSRRGVG…VAGLIIQYLE (184 aa)) enclose the ATP-grasp domain. Residues K141, 178–179 (EY), D187, and 211–213 (RSN) contribute to the ATP site. Positions 248, 260, and 262 each coordinate Mg(2+). Residues D248, E260, and N262 each coordinate Mn(2+).

The protein belongs to the RimK family. The cofactor is Mg(2+). It depends on Mn(2+) as a cofactor.

This is Probable alpha-L-glutamate ligase from Stutzerimonas stutzeri (strain A1501) (Pseudomonas stutzeri).